Reading from the N-terminus, the 306-residue chain is N-acetylmuramic acid 6-phosphate etherase (306 aa).

In terms of domain architecture, SIS spans 60 to 223; sequence TAAALRGGGR…STGAMVRLGK (164 aa). E88 functions as the Proton donor in the catalytic mechanism. Residue E119 is part of the active site.

The protein belongs to the GCKR-like family. MurNAc-6-P etherase subfamily. Homodimer.

The catalysed reaction is N-acetyl-D-muramate 6-phosphate + H2O = N-acetyl-D-glucosamine 6-phosphate + (R)-lactate. Its pathway is amino-sugar metabolism; N-acetylmuramate degradation. Functionally, specifically catalyzes the cleavage of the D-lactyl ether substituent of MurNAc 6-phosphate, producing GlcNAc 6-phosphate and D-lactate. This Gloeobacter violaceus (strain ATCC 29082 / PCC 7421) protein is N-acetylmuramic acid 6-phosphate etherase.